The primary structure comprises 213 residues: Leucine-rich repeat protein 1 (213 aa).

The first 21 residues, 1 to 21 (MGAGALGVVAMVAAAVVVAMA), serve as a signal peptide directing secretion. LRR repeat units lie at residues 90–113 (DHLQ…LGNL), 115–137 (NLIS…LGKL), 138–161 (TSLV…LAGI), and 163–186 (SLKV…PFEH).

As to quaternary structure, interacts with HIR1.

It localises to the early endosome membrane. The protein localises to the late endosome membrane. Its subcellular location is the cell membrane. Functionally, involved in plant defense response. This is Leucine-rich repeat protein 1 from Oryza sativa subsp. indica (Rice).